Reading from the N-terminus, the 453-residue chain is tRNA modification GTPase MnmE (453 aa).

Positions 23, 80, and 120 each coordinate (6S)-5-formyl-5,6,7,8-tetrahydrofolate. The TrmE-type G domain maps to 216–375 (GSKIVIIGKP…LIKYLKDLNC (160 aa)). Residue N226 coordinates K(+). GTP contacts are provided by residues 226-231 (NSGKSS), 245-251 (TSIEGTT), and 270-273 (DTAG). S230 is a Mg(2+) binding site. The K(+) site is built by T245, I247, and T250. T251 provides a ligand contact to Mg(2+). K453 provides a ligand contact to (6S)-5-formyl-5,6,7,8-tetrahydrofolate.

The protein belongs to the TRAFAC class TrmE-Era-EngA-EngB-Septin-like GTPase superfamily. TrmE GTPase family. In terms of assembly, homodimer. Heterotetramer of two MnmE and two MnmG subunits. It depends on K(+) as a cofactor.

It is found in the cytoplasm. Functionally, exhibits a very high intrinsic GTPase hydrolysis rate. Involved in the addition of a carboxymethylaminomethyl (cmnm) group at the wobble position (U34) of certain tRNAs, forming tRNA-cmnm(5)s(2)U34. This is tRNA modification GTPase MnmE from Wigglesworthia glossinidia brevipalpis.